The sequence spans 488 residues: Cysteine--tRNA ligase (488 aa).

Position 29 (cysteine 29) interacts with Zn(2+). Positions 31 to 41 (ATVQGMPHVGH) match the 'HIGH' region motif. Cysteine 227, histidine 252, and glutamate 256 together coordinate Zn(2+). A 'KMSKS' region motif is present at residues 283–287 (KMSKS). Position 286 (lysine 286) interacts with ATP.

This sequence belongs to the class-I aminoacyl-tRNA synthetase family. As to quaternary structure, monomer. It depends on Zn(2+) as a cofactor.

Its subcellular location is the cytoplasm. The catalysed reaction is tRNA(Cys) + L-cysteine + ATP = L-cysteinyl-tRNA(Cys) + AMP + diphosphate. In Pseudarthrobacter chlorophenolicus (strain ATCC 700700 / DSM 12829 / CIP 107037 / JCM 12360 / KCTC 9906 / NCIMB 13794 / A6) (Arthrobacter chlorophenolicus), this protein is Cysteine--tRNA ligase.